Reading from the N-terminus, the 607-residue chain is Elongation factor 4 (607 aa).

In terms of domain architecture, tr-type G spans 11–193 (GKIRNFSIIA…QIVEKVPAPT (183 aa)). GTP-binding positions include 23–28 (DHGKST) and 140–143 (NKID).

This sequence belongs to the TRAFAC class translation factor GTPase superfamily. Classic translation factor GTPase family. LepA subfamily.

Its subcellular location is the cell membrane. It catalyses the reaction GTP + H2O = GDP + phosphate + H(+). Required for accurate and efficient protein synthesis under certain stress conditions. May act as a fidelity factor of the translation reaction, by catalyzing a one-codon backward translocation of tRNAs on improperly translocated ribosomes. Back-translocation proceeds from a post-translocation (POST) complex to a pre-translocation (PRE) complex, thus giving elongation factor G a second chance to translocate the tRNAs correctly. Binds to ribosomes in a GTP-dependent manner. The chain is Elongation factor 4 from Streptococcus pneumoniae (strain Taiwan19F-14).